The sequence spans 239 residues: Lipoprotein-releasing system ATP-binding protein LolD (239 aa).

An ABC transporter domain is found at 14–239 (IRAERLGKTY…KLRELAPSAV (226 aa)). An ATP-binding site is contributed by 50 to 57 (GASGAGKS).

This sequence belongs to the ABC transporter superfamily. Lipoprotein translocase (TC 3.A.1.125) family. The complex is composed of two ATP-binding proteins (LolD) and two transmembrane proteins (LolC and LolE).

The protein resides in the cell inner membrane. Part of the ABC transporter complex LolCDE involved in the translocation of mature outer membrane-directed lipoproteins, from the inner membrane to the periplasmic chaperone, LolA. Responsible for the formation of the LolA-lipoprotein complex in an ATP-dependent manner. In Xanthomonas campestris pv. campestris (strain 8004), this protein is Lipoprotein-releasing system ATP-binding protein LolD.